Consider the following 354-residue polypeptide: Carbonic anhydrase 12 (354 aa).

A signal peptide spans 1-24 (MPRRSLHAAAVLLLVILKEQPSSP). Residues 25–301 (APVNGSKWTY…VQVCTAAGLS (277 aa)) are Extracellular-facing. 2 N-linked (GlcNAc...) asparagine glycosylation sites follow: Asn28 and Asn80. One can recognise an Alpha-carbonic anhydrase domain in the interval 30 to 289 (SKWTYFGPDG…FDERLVYTSF (260 aa)). A disulfide bond links Cys50 and Cys230. His94 functions as the Proton donor/acceptor in the catalytic mechanism. The Zn(2+) site is built by His119, His121, and His145. N-linked (GlcNAc...) asparagine glycosylation occurs at Asn162. Substrate is bound at residue 226-227 (TT). Residues 302–322 (LGIILSLALAGILGICIVVVV) traverse the membrane as a helical segment. At 323–354 (SIWLFRRKSIKKGDNKGVIYKPATKMETEAHA) the chain is on the cytoplasmic side.

Belongs to the alpha-carbonic anhydrase family. Homodimer. It depends on Zn(2+) as a cofactor. As to expression, highly expressed in colon, kidney, prostate, intestine and activated lymphocytes. Expressed at much higher levels in the renal cell cancers than in surrounding normal kidney tissue. Moderately expressed in pancreas, ovary and testis. Expressed in sweat glands and bronchiolar epithelium.

The protein resides in the membrane. Its subcellular location is the cell membrane. The catalysed reaction is hydrogencarbonate + H(+) = CO2 + H2O. Its activity is regulated as follows. Inhibited by coumarins, saccharin, sulfonamide derivatives such as acetazolamide (AZA), benzenesulfonamide and derivatives (4-carboxyethylbenzene-sulfonamide, 4-carboxyethylbenzene-sulfonamide ethyl ester, 4-(acetyl-2-aminoethyl)benzene-sulfonamide, 4-aminoethylbenzene-sulfonamide) and Foscarnet (phosphonoformate trisodium salt). Functionally, reversible hydration of carbon dioxide. In Homo sapiens (Human), this protein is Carbonic anhydrase 12.